We begin with the raw amino-acid sequence, 317 residues long: Proline iminopeptidase (317 aa).

In terms of domain architecture, AB hydrolase-1 spans 41–296; that stretch reads VFIHGGPGGG…ELHIVEGAGH (256 aa). The active-site Nucleophile is S113. D268 is an active-site residue. Catalysis depends on H296, which acts as the Proton donor.

The protein belongs to the peptidase S33 family. In terms of assembly, monomer.

Its subcellular location is the cytoplasm. The enzyme catalyses Release of N-terminal proline from a peptide.. In terms of biological role, specifically catalyzes the removal of N-terminal proline residues from peptides. The chain is Proline iminopeptidase (pip) from Serratia marcescens.